Here is a 957-residue protein sequence, read N- to C-terminus: Glycine dehydrogenase (decarboxylating) (957 aa).

Lysine 702 carries the post-translational modification N6-(pyridoxal phosphate)lysine.

The protein belongs to the GcvP family. As to quaternary structure, the glycine cleavage system is composed of four proteins: P, T, L and H. Pyridoxal 5'-phosphate is required as a cofactor.

It carries out the reaction N(6)-[(R)-lipoyl]-L-lysyl-[glycine-cleavage complex H protein] + glycine + H(+) = N(6)-[(R)-S(8)-aminomethyldihydrolipoyl]-L-lysyl-[glycine-cleavage complex H protein] + CO2. The glycine cleavage system catalyzes the degradation of glycine. The P protein binds the alpha-amino group of glycine through its pyridoxal phosphate cofactor; CO(2) is released and the remaining methylamine moiety is then transferred to the lipoamide cofactor of the H protein. The protein is Glycine dehydrogenase (decarboxylating) of Bradyrhizobium sp. (strain BTAi1 / ATCC BAA-1182).